The following is a 699-amino-acid chain: Elongation factor G (699 aa).

The region spanning 8–283 is the tr-type G domain; sequence EHIRNIGICA…AVVDFLPSPI (276 aa). Residues 17-24, 81-85, and 135-138 each bind GTP; these read AHIDAGKT, DTPGH, and NKMD.

The protein belongs to the TRAFAC class translation factor GTPase superfamily. Classic translation factor GTPase family. EF-G/EF-2 subfamily.

It is found in the cytoplasm. In terms of biological role, catalyzes the GTP-dependent ribosomal translocation step during translation elongation. During this step, the ribosome changes from the pre-translocational (PRE) to the post-translocational (POST) state as the newly formed A-site-bound peptidyl-tRNA and P-site-bound deacylated tRNA move to the P and E sites, respectively. Catalyzes the coordinated movement of the two tRNA molecules, the mRNA and conformational changes in the ribosome. The chain is Elongation factor G from Rickettsia peacockii (strain Rustic).